The sequence spans 412 residues: Probable serine/threonine-protein kinase PBL10 (412 aa).

G2 carries N-myristoyl glycine lipidation. A lipid anchor (S-palmitoyl cysteine) is attached at C4. Residues 15-45 (GASPKYMSSEANDSLGSKSSSVSIRTNPRTE) are disordered. Residues 23-43 (SEANDSLGSKSSSVSIRTNPR) show a composition bias toward polar residues. T58 is subject to Phosphothreonine. Residues 69-356 (FRPDSVLGEG…VVSHLEHIQT (288 aa)) form the Protein kinase domain. ATP contacts are provided by residues 75–83 (LGEGGFGSV) and K107. Y152 is subject to Phosphotyrosine. D204 functions as the Proton acceptor in the catalytic mechanism. Residues S208 and S238 each carry the phosphoserine modification. Phosphothreonine is present on residues T239 and T244. Y252 is subject to Phosphotyrosine.

Belongs to the protein kinase superfamily. Ser/Thr protein kinase family. Interacts with the Xanthomonas campestris effector XopAC/AvrAC. As to expression, expressed in stomatal guard cells of leaves.

Its subcellular location is the cell membrane. The enzyme catalyses L-seryl-[protein] + ATP = O-phospho-L-seryl-[protein] + ADP + H(+). It carries out the reaction L-threonyl-[protein] + ATP = O-phospho-L-threonyl-[protein] + ADP + H(+). Functionally, possible bi-functional kinase. In vitro, it exhibits serine/threonine activity. In vivo, can phosphorylate tyrosine residues of limited substrates. May be involved in plant defense signaling. Required for full light-induced stomatal opening. In Arabidopsis thaliana (Mouse-ear cress), this protein is Probable serine/threonine-protein kinase PBL10.